Consider the following 512-residue polypeptide: Alpha-amylase (512 aa).

The first 15 residues, 1 to 15 (MKLFVLIALFGLGFA), serve as a signal peptide directing secretion. Intrachain disulfides connect Cys-43-Cys-101, Cys-85-Cys-130, and Cys-156-Cys-175. The Ca(2+) site is built by Asn-115, Arg-173, and Asp-182. Residue Arg-210 coordinates chloride. Asp-212 (nucleophile) is an active-site residue. His-216 is a Ca(2+) binding site. Glu-248 (proton donor) is an active-site residue. Arg-352 provides a ligand contact to chloride. Intrachain disulfides connect Cys-394-Cys-400 and Cys-466-Cys-478. Asn-496 carries an N-linked (GlcNAc...) asparagine glycan.

This sequence belongs to the glycosyl hydrolase 13 family. Ca(2+) serves as cofactor. The cofactor is chloride.

It localises to the secreted. It carries out the reaction Endohydrolysis of (1-&gt;4)-alpha-D-glucosidic linkages in polysaccharides containing three or more (1-&gt;4)-alpha-linked D-glucose units.. In terms of biological role, catalyzes the hydrolysis of alpha-1,4 glycosidic linkages in starch, glycogen and similar oligosaccharides. This is Alpha-amylase from Oryzias latipes (Japanese rice fish).